The sequence spans 452 residues: Probable ECA polymerase (452 aa).

The next 11 helical transmembrane spans lie at 6–26, 37–57, 63–83, 118–138, 155–175, 181–201, 207–227, 228–248, 341–361, 378–398, and 410–430; these read FSGL…LTWF, VFFS…TSVL, VGVA…CFYG, VILM…NGFL, GVAL…VYFL, AWLF…MIVG, IIIA…ISLW, MLAA…LKRY, LVVM…GLII, YKAA…IVLA, and VFFL…FWLF.

Belongs to the WzyE family. In terms of assembly, probably part of a complex composed of WzxE, WzyE and WzzE.

The protein localises to the cell inner membrane. The protein operates within bacterial outer membrane biogenesis; enterobacterial common antigen biosynthesis. In terms of biological role, probably involved in the polymerization of enterobacterial common antigen (ECA) trisaccharide repeat units. In Salmonella heidelberg (strain SL476), this protein is Probable ECA polymerase.